The chain runs to 165 residues: uncharacterized protein (165 aa).

A coiled-coil region spans residues 1–38; it reads MFTVKEKNRQELEEELNDLEFQIYRMQENMKDLSKDAK.

This is an uncharacterized protein from Bacillus subtilis (strain 168).